A 107-amino-acid chain; its full sequence is Putidaredoxin (107 aa).

The region spanning 2–106 is the 2Fe-2S ferredoxin-type domain; that stretch reads SKVVYVSHDG…GIVVDVPDRQ (105 aa). The [2Fe-2S] cluster site is built by cysteine 40, cysteine 46, cysteine 49, and cysteine 87.

It belongs to the adrenodoxin/putidaredoxin family. As to quaternary structure, monomer. It depends on [2Fe-2S] cluster as a cofactor.

The oxidation of camphor by cytochrome P450-CAM requires the participation of a flavoprotein, putidaredoxin reductase, and an iron-sulfur protein, putidaredoxin, to mediate the transfer of electrons from NADH to P450 for oxygen activation. In Pseudomonas putida (Arthrobacter siderocapsulatus), this protein is Putidaredoxin (camB).